The sequence spans 1041 residues: Importin-9 (1041 aa).

A2 is modified (N-acetylalanine). An Importin N-terminal domain is found at 43 to 119 (AEEQIKVLEV…RELLPNGLRE (77 aa)). Residues 936–967 (QATPAEWNQDDSNDMWEDQEEEEEEEEDGLAG) are disordered. The segment covering 943–964 (NQDDSNDMWEDQEEEEEEEEDG) has biased composition (acidic residues).

Belongs to the importin beta family. Interacts with histones H2A, H2B, H3 and H4. The binding is coupled to RanGTP cycles. Interacts with AKIRIN2; promoting association with pre-assembled proteasomes. Associates with pre-assembled proteasomes; interaction is indirect and mediated via interaction with AKIRIN2. Interacts with PPP2R1A and PPP2R1B.

The protein localises to the cytoplasm. It is found in the nucleus. In terms of biological role, nuclear transport receptor that mediates nuclear import of proteins, such as histones, proteasome and actin. Serves as receptor for nuclear localization signals (NLS) in cargo substrates. Is thought to mediate docking of the importin/substrate complex to the nuclear pore complex (NPC) through binding to nucleoporin and the complex is subsequently translocated through the pore by an energy requiring, Ran-dependent mechanism. At the nucleoplasmic side of the NPC, Ran binds to the importin, the importin/substrate complex dissociates and importin is re-exported from the nucleus to the cytoplasm where GTP hydrolysis releases Ran. The directionality of nuclear import is thought to be conferred by an asymmetric distribution of the GTP- and GDP-bound forms of Ran between the cytoplasm and nucleus. Mediates the import of pre-assembled proteasomes into the nucleus; AKIRIN2 acts as a molecular bridge between IPO9 and the proteasome complex. Mediates the nuclear import of histones H2A, H2B, H4 and H4. In addition to nuclear import, also acts as a chaperone for histones by preventing inappropriate non-nucleosomal interactions. Mediates the nuclear import of actin. This chain is Importin-9, found in Mus musculus (Mouse).